The chain runs to 452 residues: Phosphoglucosamine mutase (452 aa).

Ser-97 functions as the Phosphoserine intermediate in the catalytic mechanism. The Mg(2+) site is built by Ser-97, Asp-236, Asp-238, and Asp-240. Ser-97 is subject to Phosphoserine.

The protein belongs to the phosphohexose mutase family. It depends on Mg(2+) as a cofactor. In terms of processing, activated by phosphorylation.

It catalyses the reaction alpha-D-glucosamine 1-phosphate = D-glucosamine 6-phosphate. In terms of biological role, catalyzes the conversion of glucosamine-6-phosphate to glucosamine-1-phosphate. The polypeptide is Phosphoglucosamine mutase (Prochlorococcus marinus subsp. pastoris (strain CCMP1986 / NIES-2087 / MED4)).